A 924-amino-acid polypeptide reads, in one-letter code: Periplasmic nitrate reductase (924 aa).

A signal peptide (tat-type signal) is located at residues 1–29 (MNRRDFIKNTAIASACGVAGLSVPSSVLA). Residues 35 to 91 (WRWDKAVCRFCGTGCGILVARQDGKIVAVKGDPAAPVNRGLNCIKGYFNAKIMYGED) enclose the 4Fe-4S Mo/W bis-MGD-type domain. 4 residues coordinate [4Fe-4S] cluster: Cys-42, Cys-45, Cys-49, and Cys-77. Residues Lys-79, Gln-147, Asn-172, Cys-176, 209–216 (WGANMAEM), Met-417, Gln-421, Asn-527, 552–553 (SD), Lys-575, Asp-602, and 814–823 (TGRVLEHWHS) each bind Mo-bis(molybdopterin guanine dinucleotide). Trp-890 contributes to the substrate binding site. Mo-bis(molybdopterin guanine dinucleotide)-binding residues include Asn-898 and Lys-915.

It belongs to the prokaryotic molybdopterin-containing oxidoreductase family. NasA/NapA/NarB subfamily. As to quaternary structure, component of the periplasmic nitrate reductase NapAB complex composed of NapA and NapB. Requires [4Fe-4S] cluster as cofactor. The cofactor is Mo-bis(molybdopterin guanine dinucleotide). Predicted to be exported by the Tat system. The position of the signal peptide cleavage has not been experimentally proven.

The protein resides in the periplasm. The catalysed reaction is 2 Fe(II)-[cytochrome] + nitrate + 2 H(+) = 2 Fe(III)-[cytochrome] + nitrite + H2O. In terms of biological role, catalytic subunit of the periplasmic nitrate reductase complex NapAB. Receives electrons from NapB and catalyzes the reduction of nitrate to nitrite. The polypeptide is Periplasmic nitrate reductase (Campylobacter lari (strain RM2100 / D67 / ATCC BAA-1060)).